Reading from the N-terminus, the 457-residue chain is Acetate--CoA ligase [ADP-forming] II subunit alpha (457 aa).

The protein belongs to the acetate CoA ligase alpha subunit family. In terms of assembly, heterotetramer of two alpha and two beta subunits.

The catalysed reaction is acetate + ATP + CoA = acetyl-CoA + ADP + phosphate. Its function is as follows. Catalyzes the reversible formation of acetate and ATP from acetyl-CoA by using ADP and phosphate. Can use other substrates such as phenylacetyl-CoA, indoleacetyl-CoA and isobutyryl-CoA, but not succinyl-CoA. Seems to be involved primarily in the degradation of aryl-CoA esters to the corresponding acids. Participates in the conversion of acetyl-CoA to acetate and in the degradation of branched-chain amino acids via branched-chain-acyl-CoA esters. This is Acetate--CoA ligase [ADP-forming] II subunit alpha from Pyrococcus furiosus (strain ATCC 43587 / DSM 3638 / JCM 8422 / Vc1).